The chain runs to 499 residues: Importin subunit alpha-8 (499 aa).

Residues 1 to 57 enclose the IBB domain; that stretch reads MATSKAPKERLKNYKYRGKEMSLPRQQRIASSLQLRKTRKDEQVLKRRNIDLFSSDM. ARM repeat units follow at residues 101-141, 144-183, 186-226, 229-268, 271-310, 313-352, 354-393, and 397-436; these read TPPL…NIAS, SEQT…NIAG, AEFR…NLCR, DPYP…YLTK, KEYI…NIVA, DEQT…NVAA, PRHQ…NIAT, and QDQL…YLLQ.

It belongs to the importin alpha family. Binds to importin subunit beta-1/KPNB1 via the IBB domain; this complex dissociates in the presence of RAN-GTP. Shows a limited binding to the RB1 nuclear localization signal (NLS), but not to the SV40, nor NPM1 NLSs. Interacts with RSL1D1. As to expression, expressed predominantly in ovary. Isoform 1 is the predominant form.

Its subcellular location is the nucleus. Functionally, functions in nuclear protein import. This is Importin subunit alpha-8 (Kpna7) from Mus musculus (Mouse).